The primary structure comprises 350 residues: Blue-sensitive opsin (350 aa).

Topologically, residues 1-36 are extracellular; sequence MNGTEGPNFYVPMSNATGVVRSPFEYPQYYLAEPWA. N-linked (GlcNAc...) asparagine glycans are attached at residues Asn2 and Asn15. Residues 37–61 form a helical membrane-spanning segment; it reads FSILAAYMFFLIITGFPINFLTLYV. At 62–73 the chain is on the cytoplasmic side; it reads TIEHKKLRTPLN. Residues 74 to 98 traverse the membrane as a helical segment; the sequence is YILLNLAVADLFMVFGGFTTTMYTS. At 99–113 the chain is on the extracellular side; it reads MHGYFVFGETGCNLE. Cys110 and Cys187 are disulfide-bonded. Residues 114–133 form a helical membrane-spanning segment; sequence GYFATLGGEISLWSLVVLAI. Residues 134–152 lie on the Cytoplasmic side of the membrane; it reads ERWVVVCKPISNFRFGENH. Residues 153–176 form a helical membrane-spanning segment; sequence AIMGLTLTWVMANACAMPPLFGWS. Residues 177-202 are Extracellular-facing; sequence RYIPEGLQCSCGIDYYTLKPEVNNES. An N-linked (GlcNAc...) asparagine glycan is attached at Asn200. Residues 203 to 230 form a helical membrane-spanning segment; sequence FVIYMFLVHFTIPLTIISFCYGRLVCAV. Residues 231–252 lie on the Cytoplasmic side of the membrane; sequence KEAAAQQQESETTQRAEREVTR. The chain crosses the membrane as a helical span at residues 253–276; that stretch reads MVVIMVISFLVCWIPYASVAWYIF. The Extracellular segment spans residues 277-284; it reads THQGSTFG. Residues 285–309 traverse the membrane as a helical segment; that stretch reads PIFMTVPSFFAKSSSIYNPMIYICM. N6-(retinylidene)lysine is present on Lys296. Over 310–350 the chain is Cytoplasmic; sequence NKQFRNCMITTLFCGKNPFEGEEEGSTTKTEASAVSSVSPA. The tract at residues 330–350 is disordered; the sequence is GEEEGSTTKTEASAVSSVSPA.

The protein belongs to the G-protein coupled receptor 1 family. Opsin subfamily. Phosphorylated on some or all of the serine and threonine residues present in the C-terminal region. Rod shaped photoreceptor cells which mediates vision in dim light.

It is found in the membrane. In terms of biological role, visual pigments are the light-absorbing molecules that mediate vision. They consist of an apoprotein, opsin, covalently linked to cis-retinal. The protein is Blue-sensitive opsin of Conger conger (Conger eel).